The sequence spans 140 residues: Large ribosomal subunit protein uL11 (140 aa).

It belongs to the universal ribosomal protein uL11 family. In terms of assembly, part of the ribosomal stalk of the 50S ribosomal subunit. Interacts with L10 and the large rRNA to form the base of the stalk. L10 forms an elongated spine to which L12 dimers bind in a sequential fashion forming a multimeric L10(L12)X complex. In terms of processing, one or more lysine residues are methylated.

Functionally, forms part of the ribosomal stalk which helps the ribosome interact with GTP-bound translation factors. This chain is Large ribosomal subunit protein uL11, found in Desulfatibacillum aliphaticivorans.